The sequence spans 345 residues: Gibberellin 2-beta-dioxygenase 2 (345 aa).

Positions 170–285 (HSDSLLRINH…RMSMMYFAAP (116 aa)) constitute a Fe2OG dioxygenase domain. 3 residues coordinate Fe cation: H209, D211, and H266. R276 is an active-site residue.

This sequence belongs to the iron/ascorbate-dependent oxidoreductase family. GA2OX subfamily. Fe cation is required as a cofactor. As to expression, predominantly expressed in leaves.

It catalyses the reaction gibberellin A1 + 2-oxoglutarate + O2 = gibberellin A8 + succinate + CO2. It participates in plant hormone biosynthesis; gibberellin biosynthesis. Catalyzes the 2-beta-hydroxylation of several biologically active gibberellins, leading to the homeostatic regulation of their endogenous level. Catabolism of gibberellins (GAs) plays a central role in plant development. Converts GA9/GA20 to GA51/GA29 and GA4/GA1 to GA34/GA8. The protein is Gibberellin 2-beta-dioxygenase 2 (GA2OX2) of Pisum sativum (Garden pea).